Reading from the N-terminus, the 155-residue chain is Small ribosomal subunit protein uS7cz/uS7cy (155 aa).

This sequence belongs to the universal ribosomal protein uS7 family. As to quaternary structure, part of the 30S ribosomal subunit.

The protein localises to the plastid. In terms of biological role, one of the primary rRNA binding proteins, it binds directly to 16S rRNA where it nucleates assembly of the head domain of the 30S subunit. The sequence is that of Small ribosomal subunit protein uS7cz/uS7cy (rps7-A) from Cuscuta exaltata (Tall dodder).